Reading from the N-terminus, the 606-residue chain is MAAESSYGFVYGVSGPVVTAEKMAGSAMYELVRVGHQELVGEIIRLEGDYATIQVYEETSGVTIGDPVLRTGKPLSVELGPGIMGSIFDGIQRPLKDIADITQSIYIPKGVSTNALSREARWDFVVSKDLRVGGHVTGGDIIGTVDENLLIKHKILLPPSACGTITFVAPSGQYTVEDTLLELEFAGRKQKFSMLQIWPVRSPRPVTEKLAANNPLLCGQRVLDALFPCVQGGTTAIPGAFGCGKTVISQSLSKYSNSDAIIYVGCGERGNEMSEVLRDFPELTMEVEGVTTSIMKRTALVANTSNMPVAAREASIYTGITLAEYFRDMGLNVAMMADSTSRWAEALREISGRLGEMPADSGYPAYLAARLASFYERAGRVKCLGSPEREGSVTIVGAVSPPGGDFADPVTSATLGIVQVFWGLDKKLAQRKHFPSINWLISYSEYMRALEEFYEKNYPEFVSLRTKCKEILQEEEDLSEIVQLVGKASLAESDKVTLEVAKIIKDDFLQQNGYTKYDRFCPFYKTVGMLKNMIGFYDLARHAVEATAQSDNKITWNVIKDSMGDLIYQLSAMKFKDPVADGEAKIRKDYEDLAEAMANAFRNLED.

Ala-2 is modified (N-acetylalanine). 240–247 (AFGCGKTV) provides a ligand contact to ATP.

It belongs to the ATPase alpha/beta chains family. V-ATPase is a heteromultimeric enzyme made up of two complexes: the ATP-hydrolytic V1 complex and the proton translocation V0 complex. The V1 complex consists of three catalytic AB heterodimers that form a heterohexamer, three peripheral stalks each consisting of EG heterodimers, one central rotor including subunits D and F, and the regulatory subunits C and H. The proton translocation complex V0 consists of the proton transport subunit a, a ring of proteolipid subunits c9c'', rotary subunit d, subunits e and f, and the accessory subunits vah-19/Ac45 and vah-20/PRR. Expressed in proximal but not distal germ cells.

It catalyses the reaction ATP + H2O + 4 H(+)(in) = ADP + phosphate + 5 H(+)(out). ATP hydrolysis occurs at the interface between the nucleotide-binding domains of subunits A and B. ATP hydrolysis triggers a conformational change in the subunits D and F, which induces a shift of subunit d. The c-ring is subsequently rotated and results in a continuous proton translocation across the membrane. Its function is as follows. Catalytic subunit of the V1 complex of vacuolar(H+)-ATPase (V-ATPase), a multisubunit enzyme composed of a peripheral complex (V1) that hydrolyzes ATP and a membrane integral complex (V0) that translocates protons. V-ATPase is responsible for acidifying and maintaining the pH of intracellular compartments and in some cell types, is targeted to the plasma membrane, where it is responsible for acidifying the extracellular environment. Required along with other vacuolar ATPase components for the removal of protein aggregates which form in immature oocytes in the distal gonad. This removal occurs as the oocytes mature and move to the proximal gonad, is triggered by the introduction of sperm through mating and occurs before fertilization. The introduction of sperm triggers V-ATPase accumulation in proximal oocytes and induces lysosomal acidification which leads to engulfing of protein aggregates by lysosomes and subsequent clearance of the aggregates. Lysosomal acidification also leads to changes in mitochondrial morphology and function. Mitochondria in distal immature oocytes are fragmented, produce high levels of reactive oxygen species (ROS) and have high membrane potential, indicative of metabolic inactivity. In contrast, mitochondria in proximal mature oocytes are tubular with lower ROS levels and membrane potential, indicative of an active metabolic state required for aggregate mobilization before clearance. Involved in receptor-mediated endocytosis. The chain is V-type proton ATPase catalytic subunit A from Caenorhabditis elegans.